Reading from the N-terminus, the 395-residue chain is MSWKTLDDMDVAGKRVLLRVDINVPVEEGQVTDRTRIDRIIPTLQDILAKGGTPIMLAHFGRPKGKVVPEMSLRVTLPALEAALGRKVTFIEEPNAERLSDLPEGIVVLLENTRFAVGEEANDPEMARFLATLGDVFCNDAFSAAHRAHASTTGVAHLLPSCAGRLMQAELSALEAALSTPQRPVGAVVGGAKVSTKIALLENLVARLDVLVIGGGMANTFLAAQGAKLGASLMEPDYMETARTIMQSAERAGCKLLLPVDGVVAREFKAGADFEVVALGKDTVLAEDQMVLDAGPQSVAAVMAAFRTLKTLIWNGPLGAFEITPFNQATNATALEAARLTKSGALISVAGGGDTVAALNQAGAAADFTYISTAGGAFLEWMEGKTLPGVAALQG.

Residues Asp21–Asn23, Arg36, His59–Arg62, Arg114, and Arg147 contribute to the substrate site. ATP-binding positions include Lys197, Glu322, and Gly352 to Thr355.

Belongs to the phosphoglycerate kinase family. As to quaternary structure, monomer.

It localises to the cytoplasm. The enzyme catalyses (2R)-3-phosphoglycerate + ATP = (2R)-3-phospho-glyceroyl phosphate + ADP. Its pathway is carbohydrate degradation; glycolysis; pyruvate from D-glyceraldehyde 3-phosphate: step 2/5. The chain is Phosphoglycerate kinase from Roseobacter denitrificans (strain ATCC 33942 / OCh 114) (Erythrobacter sp. (strain OCh 114)).